The chain runs to 367 residues: Glutamate 5-kinase (367 aa).

Lys9 serves as a coordination point for ATP. The substrate site is built by Ser49, Asp136, and Asn148. ATP contacts are provided by residues 168–169 (TD) and 210–216 (TGGMKSK). The PUA domain maps to 276-350 (SGQIEVDAGA…GMQSQDIQVR (75 aa)).

It belongs to the glutamate 5-kinase family.

Its subcellular location is the cytoplasm. The catalysed reaction is L-glutamate + ATP = L-glutamyl 5-phosphate + ADP. It participates in amino-acid biosynthesis; L-proline biosynthesis; L-glutamate 5-semialdehyde from L-glutamate: step 1/2. In terms of biological role, catalyzes the transfer of a phosphate group to glutamate to form L-glutamate 5-phosphate. The sequence is that of Glutamate 5-kinase from Bacillus cereus (strain ATCC 14579 / DSM 31 / CCUG 7414 / JCM 2152 / NBRC 15305 / NCIMB 9373 / NCTC 2599 / NRRL B-3711).